Reading from the N-terminus, the 1551-residue chain is ABC-type transporter phomO (1551 aa).

7 helical membrane passes run 34 to 54 (LYFE…LLAA), 110 to 130 (CTAG…CTTV), 139 to 159 (SVPA…LAHF), 172 to 192 (SSSL…APLV), 202 to 222 (GSAL…LIAV), 314 to 334 (LGLY…FTLA), and 358 to 378 (GLIG…GWYW). The region spanning 326-599 (LCLAGFTLAQ…LLQIIPSFGA (274 aa)) is the ABC transmembrane type-1 1 domain. The N-linked (GlcNAc...) asparagine glycan is linked to N384. The next 4 helical transmembrane spans lie at 428–448 (LAYA…TWML), 452–472 (VGPP…ASTY), 535–555 (LIVG…VLVF), and 577–597 (LIWI…IPSF). One can recognise an ABC transporter 1 domain in the interval 645-861 (IHNSSFSYTD…VEDENGDVDN (217 aa)). N-linked (GlcNAc...) asparagine glycosylation occurs at N647. Residue 678–685 (GPAGCGKS) coordinates ATP. N-linked (GlcNAc...) asparagine glycosylation occurs at N721. The segment at 843-889 (YQFPPSQADVEDENGDVDNGAENTRPRESSHTTEAQSGPPEPKSKPT) is disordered. 4 consecutive transmembrane segments (helical) span residues 903–923 (SIGF…AFCL), 959–979 (VLPL…IVPL), 1027–1044 (LFNT…VILI), and 1137–1157 (LVLN…AVGL). The 290-residue stretch at 910-1199 (VLFIGGGIIF…LLTAWTSLET (290 aa)) folds into the ABC transmembrane type-1 2 domain. N1179 carries N-linked (GlcNAc...) asparagine glycosylation. Residues 1219-1228 (DVLVRPDSLD) show a composition bias toward basic and acidic residues. Residues 1219-1296 (DVLVRPDSLD…HEATTITTTS (78 aa)) form a disordered region. The span at 1259–1270 (YDDDDESDENTD) shows a compositional bias: acidic residues. One can recognise an ABC transporter 2 domain in the interval 1287–1535 (HEATTITTTS…SDIFAFFGRS (249 aa)). 1323–1330 (GRTGSGKS) contacts ATP. N1486 carries an N-linked (GlcNAc...) asparagine glycan.

It belongs to the ABC transporter superfamily. ABCC family. Conjugate transporter (TC 3.A.1.208) subfamily.

Its subcellular location is the membrane. ABC-type transporter; part of the gene cluster that mediates the biosynthesis of the phomopsins, a group of hexapeptide mycotoxins which infects lupins and causes lupinosis disease in livestock. This Diaporthe leptostromiformis (Lupinosis disease fungus) protein is ABC-type transporter phomO.